Reading from the N-terminus, the 235-residue chain is Ribosomal RNA small subunit methyltransferase G (235 aa).

S-adenosyl-L-methionine contacts are provided by residues glycine 74, phenylalanine 79, 97 to 99, 125 to 126, and arginine 144; these read EAT and AE.

Belongs to the methyltransferase superfamily. RNA methyltransferase RsmG family.

It localises to the cytoplasm. Functionally, specifically methylates the N7 position of a guanine in 16S rRNA. The chain is Ribosomal RNA small subunit methyltransferase G from Dehalococcoides mccartyi (strain ATCC BAA-2100 / JCM 16839 / KCTC 5957 / BAV1).